The following is a 388-amino-acid chain: Pepsin A-2/A-3 (388 aa).

Positions 1 to 15 (MKWLLLLGLVALSEC) are cleaved as a signal peptide. 2 propeptides (activation peptide) span residues 16-40 (IIHK…LLKD) and 41-62 (FLKK…APTL). The 310-residue stretch at 76 to 385 (YFGTIGIGTP…DRANNQVGLA (310 aa)) folds into the Peptidase A1 domain. Residue D94 is part of the active site. A disulfide bridge connects residues C107 and C112. S130 is modified (phosphoserine). The cysteines at positions 268 and 272 are disulfide-linked. D277 is an active-site residue. C311 and C344 are joined by a disulfide.

It belongs to the peptidase A1 family. In terms of processing, pepsin A-2 is phosphorylated, but not pepsin A-3. Each pepsinogen is converted to corresponding pepsin at pH 2.0 in part as a result of the release of a 47 AA activation segment and in part as a result of stepwise proteolytic cleavage via an intermediate form(s).

Its subcellular location is the secreted. The catalysed reaction is Preferential cleavage: hydrophobic, preferably aromatic, residues in P1 and P1' positions. Cleaves 1-Phe-|-Val-2, 4-Gln-|-His-5, 13-Glu-|-Ala-14, 14-Ala-|-Leu-15, 15-Leu-|-Tyr-16, 16-Tyr-|-Leu-17, 23-Gly-|-Phe-24, 24-Phe-|-Phe-25 and 25-Phe-|-Tyr-26 bonds in the B chain of insulin.. Functionally, shows particularly broad specificity; although bonds involving phenylalanine and leucine are preferred, many others are also cleaved to some extent. This Macaca fuscata fuscata (Japanese macaque) protein is Pepsin A-2/A-3.